Consider the following 658-residue polypeptide: Endoplasmic reticulum chaperone BiP (658 aa).

The N-terminal stretch at 1 to 19 (MVTMKLFALVLLVSASVFA) is a signal peptide. ATP contacts are provided by residues 38 to 41 (GTTY), K98, 228 to 230 (GGT), 294 to 301 (EKAKRALS), and 365 to 368 (GSTR). The interval 127-281 (KPYIEVDIGD…KKKTGKDVRA (155 aa)) is nucleotide-binding (NBD). The segment at 410 to 420 (QDTGDLVLLDV) is interdomain linker. Residues 421–501 (CPLTLGIETV…PRGVPQIEVT (81 aa)) are substrate-binding (SBD). The disordered stretch occupies residues 634 to 658 (KLYGGAGAPPPEGAEGAEETEKDEL). Over residues 648–658 (EGAEETEKDEL) the composition is skewed to acidic residues. The Prevents secretion from ER signature appears at 655 to 658 (KDEL).

Belongs to the heat shock protein 70 family. In terms of assembly, monomer and homooligomer; homooligomerization via the interdomain linker inactivates the chaperone activity and acts as a storage of hspa5/BiP molecules. Interacts with DNAJC10. Interacts with dnajb9/ERdj4; leading to recruit hspa5/BiP to ern1/ire1. Interacts with ern1/ire1; interaction takes place following interaction with dnajb9/ERdj4 and leads to inactivate ern1/IRE1.

The protein localises to the endoplasmic reticulum lumen. It catalyses the reaction ATP + H2O = ADP + phosphate + H(+). The chaperone activity is regulated by ATP-induced allosteric coupling of the nucleotide-binding (NBD) and substrate-binding (SBD) domains. In the ADP-bound and nucleotide-free (apo) states, the two domains have little interaction. In contrast, in the ATP-bound state the two domains are tightly coupled, which results in drastically accelerated kinetics in both binding and release of polypeptide substrates. J domain-containing co-chaperones (dnajb9/ERdj4 or dnajc10/ERdj5) stimulate the ATPase activity and are required for efficient substrate recognition by hspa5/BiP. Homooligomerization inactivates participating hspa5/BiP protomers and probably act as reservoirs to store hspa5/BiP molecules when they are not needed by the cell. Functionally, endoplasmic reticulum chaperone that plays a key role in protein folding and quality control in the endoplasmic reticulum lumen. Involved in the correct folding of proteins and degradation of misfolded proteins via its interaction with dnajc10/ERdj5, probably to facilitate the release of dnajc10/ERdj5 from its substrate. Acts as a key repressor of the EIF2AK3/PERK and ERN1/IRE1-mediated unfolded protein response (UPR). In the unstressed endoplasmic reticulum, recruited by DNAJB9/ERdj4 to the luminal region of ERN1/IRE1, leading to disrupt the dimerization of ERN1/IRE1, thereby inactivating ERN1/IRE1. Also binds and inactivates EIF2AK3/PERK in unstressed cells. Accumulation of misfolded protein in the endoplasmic reticulum causes release of HSPA5/BiP from ERN1/IRE1 and EIF2AK3/PERK, allowing their homodimerization and subsequent activation. The polypeptide is Endoplasmic reticulum chaperone BiP (Xenopus laevis (African clawed frog)).